The following is a 210-amino-acid chain: Ribosomal RNA large subunit methyltransferase E (210 aa).

S-adenosyl-L-methionine contacts are provided by Gly-60, Trp-62, Asp-85, Asp-101, and Asp-126. Residue Lys-166 is the Proton acceptor of the active site. Basic and acidic residues predominate over residues 191 to 200 (KPKASRDKSS). The disordered stretch occupies residues 191-210 (KPKASRDKSSETFLVARDLK).

It belongs to the class I-like SAM-binding methyltransferase superfamily. RNA methyltransferase RlmE family.

Its subcellular location is the cytoplasm. The catalysed reaction is uridine(2552) in 23S rRNA + S-adenosyl-L-methionine = 2'-O-methyluridine(2552) in 23S rRNA + S-adenosyl-L-homocysteine + H(+). Specifically methylates the uridine in position 2552 of 23S rRNA at the 2'-O position of the ribose in the fully assembled 50S ribosomal subunit. This is Ribosomal RNA large subunit methyltransferase E from Bordetella bronchiseptica (strain ATCC BAA-588 / NCTC 13252 / RB50) (Alcaligenes bronchisepticus).